Here is a 199-residue protein sequence, read N- to C-terminus: Protein ASYMMETRIC LEAVES 2 (199 aa).

The region spanning 8 to 109 (SPCAACKFLR…IDLSCAKSEL (102 aa)) is the LOB domain.

It belongs to the LOB domain-containing protein family. In terms of assembly, homo- and heterodimer with AS1. Interacts with AS1. Part of the AS1 repressor complex composed of AS1, LBD6/AS2 and HDA6. Interacts with LFR. In terms of tissue distribution, expressed in young shoots, roots, stems, leaves, flowers and adaxial domains of cotyledonary and leaves primordia.

It localises to the nucleus. Functionally, negative regulator of cell proliferation in the adaxial side of leaves. Regulates the formation of a symmetric lamina and the establishment of venation. Positively regulates LATERAL ORGAN BOUNDARIES (LOB) within the shoot apex, and the class III HD-ZIP genes REV, PHB, and PHV. Interacts directly with ASYMMETRIC LEAVES 1 (AS1) to repress the knox homeobox genes KNAT1, KNAT2, and KNAT6 and the abaxial determinants ARF3, KAN2 and YAB5. May act in parallel with the RDR6-SGS3-AGO7 pathway, an endogenous RNA silencing pathway, to regulate the leaf morphogenesis. Required for the binding of AS1 to the KNOX genes. Involved in leaf polarity establishment by functioning cooperatively with RH10 or RID2 to repress abaxial genes ARF3, ARF4, KAN1, KAN2, YAB1 and YAB5, and the knox homeobox genes KNAT1, KNAT2, KNAT6, and STM to promote adaxial development in leaf primordia at shoot apical meristems at high temperatures. This chain is Protein ASYMMETRIC LEAVES 2, found in Arabidopsis thaliana (Mouse-ear cress).